The sequence spans 649 residues: Putative cystathionine gamma-synthase YML082W (649 aa).

The interval 242 to 273 is disordered; the sequence is NEANHGEDHDGGISGEVDSQEEPHNGLVSTIP. Ser287 is modified (phosphoserine). Lys451 carries the N6-(pyridoxal phosphate)lysine modification.

The protein belongs to the trans-sulfuration enzymes family. MET7 subfamily. It depends on pyridoxal 5'-phosphate as a cofactor.

It carries out the reaction O-succinyl-L-homoserine + L-cysteine = L,L-cystathionine + succinate + H(+). It participates in amino-acid biosynthesis; L-methionine biosynthesis via de novo pathway; L-cystathionine from O-succinyl-L-homoserine: step 1/1. Its function is as follows. Catalyzes the formation of L-cystathionine from O-succinyl-L-homoserine (OSHS) and L-cysteine, via a gamma-replacement reaction. In the absence of thiol, catalyzes gamma-elimination to form 2-oxobutanoate, succinate and ammonia. The polypeptide is Putative cystathionine gamma-synthase YML082W (Saccharomyces cerevisiae (strain ATCC 204508 / S288c) (Baker's yeast)).